Reading from the N-terminus, the 378-residue chain is Signal peptide peptidase (378 aa).

Residues 1–27 (MDSAVSDPHNGSAEAGTPANGTTRPPS) are disordered. The Lumenal portion of the chain corresponds to 1 to 31 (MDSAVSDPHNGSAEAGTPANGTTRPPSTPEG). Asn-10 and Asn-20 each carry an N-linked (GlcNAc...) asparagine glycan. Residues 32–52 (IALAYGSLLLMALLPIFFGAL) form a helical membrane-spanning segment. The Cytoplasmic segment spans residues 53–77 (RSVRCARGKSSSDMPETITSRDAAR). Residues 78-98 (FPIIASCTLLGLYLFFKIFSQ) form a helical membrane-spanning segment. The Lumenal segment spans residues 99-100 (EY). The helical transmembrane segment at 101–121 (INLLLSMYFFVLGILALSHTI) threads the bilayer. The Cytoplasmic portion of the chain corresponds to 122–157 (SPFMNKFFPANFPNRQYQLLFTQGSGENKEEIINYE). Residues 158 to 178 (FDTKDLVCLGLSSVVGVWYLL) traverse the membrane as a helical segment. Residues 179 to 181 (RKH) are Lumenal-facing. A helical membrane pass occupies residues 182–202 (WIANNLFGLAFSLNGVELLHL). Residues 203–209 (NNVSTGC) lie on the Cytoplasmic side of the membrane. A helical transmembrane segment spans residues 210–230 (ILLGGLFIYDIFWVFGTNVMV). The active site involves Asp-219. At 231–256 (TVAKSFEAPIKLVFPQDLLEKGLEAD) the chain is on the lumenal side. The chain crosses the membrane as a helical span at residues 257–277 (NFAMLGLGDIVIPGIFIALLL). Asp-265 is a catalytic residue. Residues 278–290 (RFDISLKKNTHTY) lie on the Cytoplasmic side of the membrane. A helical transmembrane segment spans residues 291 to 311 (FYTSFAAYIFGLGLTIFIMHI). Topologically, residues 312 to 314 (FKH) are lumenal. The helical transmembrane segment at 315 to 335 (AQPALLYLVPACIGFPVLVAL) threads the bilayer. Positions 317 to 319 (PAL) match the PAL motif. The Cytoplasmic portion of the chain corresponds to 336-378 (AKGEVAEMFSYEESNPKDPAAETESKEESTEASASKRLEKKEK). The segment at 346–378 (YEESNPKDPAAETESKEESTEASASKRLEKKEK) is disordered. The span at 349-378 (SNPKDPAAETESKEESTEASASKRLEKKEK) shows a compositional bias: basic and acidic residues. At Ser-368 the chain carries Phosphoserine.

Belongs to the peptidase A22B family. Monomer. Homodimer. Interacts with RNF139. Interacts with DERL1 and XBP1 isoform 1. Widely expressed with highest levels in liver and kidney. In the brain, expressed predominantly in hippocampus, amygdala, piriform cortex, choroid plexus and arcuate nucleus of the hypothalamic area. Isoform 1 is more strongly expressed than isoform 4 in most tissues except brain and skeletal muscle where isoform 4 is the dominant isoform and in testis where isoform 1 and isoform 4 are expressed at similar levels. In the brain, isoform 4 is not detected in the choroid plexus.

The protein resides in the endoplasmic reticulum membrane. The protein localises to the membrane. It is found in the cell membrane. In terms of biological role, catalyzes intramembrane proteolysis of signal peptides that have been removed from precursors of secretory and membrane proteins, resulting in the release of the fragment from the ER membrane into the cytoplasm. Required to generate lymphocyte cell surface (HLA-E) epitopes derived from MHC class I signal peptides. Involved in the intramembrane cleavage of the integral membrane protein PSEN1. Cleaves the integral membrane protein XBP1 isoform 1 in a DERL1/RNF139-dependent manner. May play a role in graft rejection. The sequence is that of Signal peptide peptidase from Mus musculus (Mouse).